We begin with the raw amino-acid sequence, 734 residues long: Serine protease FAM111B (734 aa).

Met1 is modified (N-acetylmethionine). Composition is skewed to basic and acidic residues over residues 1 to 10 and 17 to 32; these read MNSMKTEENK and DDQR…TVMK. The tract at residues 1-32 is disordered; that stretch reads MNSMKTEENKSFSAMEDDQRTRPEVSKDTVMK. Residue Lys284 forms a Glycyl lysine isopeptide (Lys-Gly) (interchain with G-Cter in SUMO2) linkage. Positions 285 to 321 are disordered; it reads QNESATDEINHQSLIQSKKKVHKPKKDGETKDVEHSR. A compositionally biased stretch (basic and acidic residues) spans 310–321; that stretch reads KDGETKDVEHSR. Catalysis depends on charge relay system residues His490, Asp544, and Ser650. Residues 712-734 are disordered; that stretch reads TYDEEKGKQESSLQDHQIEPMEC.

Belongs to the FAM111 family. As to expression, widely expressed.

Functionally, serine protease. The chain is Serine protease FAM111B from Homo sapiens (Human).